A 451-amino-acid chain; its full sequence is MTFNITSMDEDVLLTERESSFRVLTGCFLSVLILSTLLGNTLVCAAVIRFRHLRSKVTNFFVISLAVSDLLVAVLVMPWKAVAEIAGFWPFGTFCNIWVAFDIMCSTASILNLCVISVDRYWAISSPFRYERKMTPKVAFIMIGVAWTLSVLISFIPVQLNWHKAKTTSFFDLNITLHDRTMDNCDSSLNRTYAISSSLISFYIPVAIMIVTYTRIYRIAAKQIRRISALERAAVHAKNCQNSTSNRNSLDCQQPESSLKTSFKRETKVLKTLSVIMGVFVCCWLPFFILNCIVPFCDPSLTTSGTEPFCISSTTFDVFVWFGWANSSLNPIIYAFNADFRKAFSNLLGCYRLCPTSNNIIETVSINNNGAVVYSCQQEPKGSIPNECNLVYLIPHAIICPEDEVLKKEDESGLSKSLEKMSPAFSGILDYDADVSLEKINPITQNGQPKT.

The Extracellular portion of the chain corresponds to M1–R22. Residue N4 is glycosylated (N-linked (GlcNAc...) asparagine). A helical transmembrane segment spans residues V23–I48. At R49–N59 the chain is on the cytoplasmic side. A helical transmembrane segment spans residues F60–A86. Topologically, residues G87–C95 are extracellular. A disulfide bridge links C95 with C185. A helical transmembrane segment spans residues N96–V118. At D119–K137 the chain is on the cytoplasmic side. The chain crosses the membrane as a helical span at residues V138 to W162. The Extracellular segment spans residues H163–R191. A helical transmembrane segment spans residues T192–Y217. The Cytoplasmic portion of the chain corresponds to R218–K271. The helical transmembrane segment at T272–D298 threads the bilayer. The Extracellular segment spans residues P299–T315. The chain crosses the membrane as a helical span at residues F316 to F340. Topologically, residues R341–T451 are cytoplasmic. A lipid anchor (S-palmitoyl cysteine) is attached at C350.

The protein belongs to the G-protein coupled receptor 1 family. Brain.

The protein resides in the cell membrane. The protein localises to the cell projection. It is found in the cilium membrane. In terms of biological role, dopamine receptor whose activity is mediated by G proteins which activate adenylyl cyclase. The protein is D(1A) dopamine receptor (drd1) of Xenopus laevis (African clawed frog).